A 660-amino-acid chain; its full sequence is MTEENKSFYITTPIYYPSGKLHIGHAYTTVAGDAMARYKRMQGYNVHYLTGTDEHGQKIQKKAEELNITPQAYVDNIVAGIKELWEKMNISYDDFIRTTEDRHKDVVEKIFKQLVDQGDIYLDEYEGWYSVQDETFYTEHQLVDPIMEGDKVVGGKSPDSGHDVELVREESYFFRMGKYVDRLLKFYEDNPHFIQPESRKNEMINNFIKPGLEDLAVSRTSFDWGVRVPGNPKHVIYVWVDALSNYITALGYGTANEEKYKKFWPADVHLVGKEIVRFHTIYWPIILMALDLPLPKKVFAHGWILMKDGKMSKSKGNVVDPVTLIDRYGLDALRYYLLREVPFGSDGVFTPEGFVERINFDLANDLGNLLNRTVAMIDKYFSGEIPAFKANVTEFDETLVAFAQDTLKKVEEAMENMEFSVALGSIWQLVSRTNKYIDETQPWVLAKDENDREKLASVMAHLAEVLRQTGIMLMPFLTVAPSKMFAQLGLTDEAHKSWESLSTIGCIPAGTKVEKGNPIFPRLEMEVEVEYIKEQMKSSAPKVEEKKEEEPKAEEITIDDFFKVELRVAEVLSAEPVKKADKLLKIQLDLGTEKRQVVSGIAKFYSPEDLKGKKVICVTNLKPVKLRGELSQGMILAGEENGVLSLASIDQNLPNGTKIK.

Positions 15 to 25 match the 'HIGH' region motif; that stretch reads YYPSGKLHIGH. Residues 310–314 carry the 'KMSKS' region motif; sequence KMSKS. Lys313 is an ATP binding site. The 101-residue stretch at 560-660 folds into the tRNA-binding domain; that stretch reads DFFKVELRVA…QNLPNGTKIK (101 aa).

It belongs to the class-I aminoacyl-tRNA synthetase family. MetG type 2B subfamily. As to quaternary structure, homodimer.

The protein resides in the cytoplasm. It catalyses the reaction tRNA(Met) + L-methionine + ATP = L-methionyl-tRNA(Met) + AMP + diphosphate. Is required not only for elongation of protein synthesis but also for the initiation of all mRNA translation through initiator tRNA(fMet) aminoacylation. The polypeptide is Methionine--tRNA ligase 1 (Bacillus cereus (strain ATCC 14579 / DSM 31 / CCUG 7414 / JCM 2152 / NBRC 15305 / NCIMB 9373 / NCTC 2599 / NRRL B-3711)).